A 517-amino-acid polypeptide reads, in one-letter code: GMP synthase [glutamine-hydrolyzing] (517 aa).

A Glutamine amidotransferase type-1 domain is found at 9–199 (RILILDFGSQ…VLNACGCEGL (191 aa)). Cysteine 86 (nucleophile) is an active-site residue. Catalysis depends on residues histidine 173 and glutamate 175. The GMPS ATP-PPase domain occupies 200–392 (WTSASIIEDA…LGLPYNMLYR (193 aa)). 227–233 (SGGVDSS) contacts ATP.

In terms of assembly, homodimer.

It catalyses the reaction XMP + L-glutamine + ATP + H2O = GMP + L-glutamate + AMP + diphosphate + 2 H(+). Its pathway is purine metabolism; GMP biosynthesis; GMP from XMP (L-Gln route): step 1/1. Its function is as follows. Catalyzes the synthesis of GMP from XMP. The polypeptide is GMP synthase [glutamine-hydrolyzing] (Vibrio atlanticus (strain LGP32) (Vibrio splendidus (strain Mel32))).